Here is a 204-residue protein sequence, read N- to C-terminus: E2 ubiquitin-conjugating enzyme PEX4 (204 aa).

One can recognise a UBC core domain in the interval Ser2 to Ile196. Residue Cys133 is the Glycyl thioester intermediate of the active site.

It belongs to the ubiquitin-conjugating enzyme family.

It localises to the peroxisome membrane. It carries out the reaction S-ubiquitinyl-[E1 ubiquitin-activating enzyme]-L-cysteine + [E2 ubiquitin-conjugating enzyme]-L-cysteine = [E1 ubiquitin-activating enzyme]-L-cysteine + S-ubiquitinyl-[E2 ubiquitin-conjugating enzyme]-L-cysteine.. The protein operates within protein modification; protein ubiquitination. E2 ubiquitin-conjugating enzyme involved in peroxisome biosynthesis. Acts late in peroxisomal matrix protein import, after matrix protein translocation. Required for both monoubiquitination and polyubiquitination of coreceptor PEX20. polyubiquitination of PEX20 at conserved lysine 'Lys-19' near the N-terminus leads to its and proteasomal degradation, whereas a monoubiquitination at the conserved cysteine 'Cys-8' is essential for its recycling. This chain is E2 ubiquitin-conjugating enzyme PEX4, found in Komagataella phaffii (strain GS115 / ATCC 20864) (Yeast).